Consider the following 375-residue polypeptide: MTSNENFENGFDLPPPDDSAEDLKLFIKKFERSLNSALLEFDENNQETIENFRQAKEHKMRFETECDQKLRNWKRLAIEREVSEEQSGEVQFPRWIDEWANTKLGGIFERIFSKMDSMQNDMNSRFDAMQTEMSVMKNGIASIKGEMAEMKGEMTVMKNDIASIKGEMAEMKGEMAVMKNDIASIKGEMAEMKGEMTVMKNDIASIKGEMAEMKGEMTIMKSDIDSVKGETTTLKGEVTAMKDSISQLDRKIDLLDQRTEERFNNMAQTMQKIDDRSCKSMMLTRKYENMVRSDMHYSAVPVPFLNGDEPRDYELPPLASFEDIDNLTKEQCIQYLHGYGVNKFSPLETVKLKERLQEAIGLWSKGHESHKYHTF.

This sequence belongs to the UPF0612 family.

The protein resides in the cytoplasm. This Schizosaccharomyces pombe (strain 972 / ATCC 24843) (Fission yeast) protein is UPF0612 protein C569.003.